The chain runs to 474 residues: Probable diacyglycerol O-acyltransferase Tgs4 (474 aa).

H135 (proton acceptor) is an active-site residue.

Belongs to the long-chain O-acyltransferase family.

The catalysed reaction is an acyl-CoA + a 1,2-diacyl-sn-glycerol = a triacyl-sn-glycerol + CoA. Its pathway is glycerolipid metabolism; triacylglycerol biosynthesis. In terms of biological role, required for maintaining the appropriate mycolic acid composition and permeability of the envelope on its exposure to acidic pH. The polypeptide is Probable diacyglycerol O-acyltransferase Tgs4 (tgs4) (Mycobacterium tuberculosis (strain CDC 1551 / Oshkosh)).